The chain runs to 828 residues: MASTLPTTWPHESVKFEDVSLTFTEEEWAQLDFQQKCLYREIMMENYSNMISVEHHFSKPNVISQLEKAEDCWPMQREIPQDTLPECSWPSPDPGMNSFPSKSPLMKIEVVEVLTLNKDVAGPRNALIQSLYPEDLNPGNLKPAQQPSKRLTDTEASRQKFRHFQYEESAGPQKAMSQLRKLCHQWLQPNTRSKKQILELLVLEQFLNALPEKFRVWVESQHPEDCKAVVALLENMTSVSKDDASLACSSEATDQLKEKRKGVATLPVTFAAEVPAEEPVTFQDVAVDFNEEEWRLLGPTQKTEYHDVMLETLGNLVSVGWEPTLGNRELTPDSPIPVVKPIHDPNTNDLSRNGTQSTVFESILEDGVKEMHSIESNQVGNLQEKGHPQKKFSESSKSQDQTSRHKSQGSLNEVLPRKYVKVKQKGTGKRKGRTNTISMTRGLRIRKQQKDSVEWQGRSGSTPVTHGSSIKKQQQGSEQGKPGTSRDPITLTVPAKVYQKATGSEESIFMDSSDAMVPDVPPKIHQKGPEWHKVGESNNSMLQGSSVQNHQMESGAGRASDNSLLTHALPVKSHQKGYKEGNVQGNRNSWKHIKPHQKGSKGERVEELSTSEKHVPYVKNHLKTSERGKDREINASIKCDPYIKTYYRGSDVGRLRRANNCRKAFSLHAQQISFIKIHKGSQVCRCSECGKLFRNARYFSVHKKIHTGERPYMCMACGKAFVQSSSLTQHLRIHSGERPFECSECGRTFNDRSAISQHLRTHTGAKPYHCERCGKAFRQSSHLTRHERTHTGERPYVCIKCGKAFTQSSHLIGHQKTHGIKFKKQPKL.

Positions 14–85 (VKFEDVSLTF…QREIPQDTLP (72 aa)) constitute a KRAB 1 domain. Residue lysine 15 forms a Glycyl lysine isopeptide (Lys-Gly) (interchain with G-Cter in ubiquitin) linkage. Residues 158–240 (RQKFRHFQYE…ALLENMTSVS (83 aa)) enclose the SCAN box domain. Residues 280–370 (VTFQDVAVDF…ESILEDGVKE (91 aa)) form the KRAB 2 domain. Disordered regions lie at residues 328–355 (RELTPDSPIPVVKPIHDPNTNDLSRNGT), 377–490 (NQVG…DPIT), and 575–611 (QKGYKEGNVQGNRNSWKHIKPHQKGSKGERVEELSTS). Over residues 345–355 (PNTNDLSRNGT) the composition is skewed to polar residues. The segment covering 384-394 (EKGHPQKKFSE) has biased composition (basic and acidic residues). The segment covering 418-433 (KYVKVKQKGTGKRKGR) has biased composition (basic residues). Residues 458-478 (RSGSTPVTHGSSIKKQQQGSE) show a composition bias toward polar residues. Basic residues predominate over residues 589–599 (SWKHIKPHQKG). Basic and acidic residues predominate over residues 600–611 (SKGERVEELSTS). 5 consecutive C2H2-type zinc fingers follow at residues 684 to 706 (CRCSECGKLFRNARYFSVHKKIH), 712 to 734 (YMCMACGKAFVQSSSLTQHLRIH), 740 to 762 (FECSECGRTFNDRSAISQHLRTH), 768 to 790 (YHCERCGKAFRQSSHLTRHERTH), and 796 to 818 (YVCIKCGKAFTQSSHLIGHQKTH).

The protein belongs to the krueppel C2H2-type zinc-finger protein family. In terms of assembly, interacts with NGFR/p75(NTR). Interacts (via KRAB 1 domain) with TRAF6. Interacts (when ubiquitinated at Lys-15) with SQSTM1/p62. In terms of processing, ubiquitinated by TRAF6 at Lys-15 through 'Lys-63'-linked polyubiquitination. 'Lys-63'-linked polyubiquitination occurs in response to NGFR/p75(NTR) cleavage by gamma-secretase and promotes binding with the ICD cleavage product of NGFR/p75(NTR), followed by translocation into the nucleus and subsequent apoptosis. Ubiquitously expressed at low level. Expressed at higher level in testis.

The protein localises to the cytoplasm. Its subcellular location is the nucleus. Functionally, transcription regulator involved in NGFR/p75(NTR)-mediated apoptosis. Essential component of the NGFR/p75(NTR) apoptotic pathway: upon ligand-binding and subsequent cleavage of NGFR/p75(NTR), binds to the intracellular domain (ICD) cleavage product of NGFR/p75(NTR), translocates to the nucleus and induces apoptosis, possibly by regulating expression of key regulators of apoptosis. Induces NGFR/p75(NTR)-mediated apoptosis in retina and sympathetic neurons. May also regulate expression of neuronal cholesterol biosynthesis genes. Probably acts as a transcription repressor: specifically binds to the 3'-end of zinc-finger coding genes and recruiting chromatin-modifying proteins such as SETDB1 and TRIM28/KAP1, leading to transcription repression. In Mus musculus (Mouse), this protein is Neurotrophin receptor-interacting factor 1 (Nrif1).